The following is an 819-amino-acid chain: Deubiquitinase MYSM1 (819 aa).

The segment covering 1 to 12 (MEAEEADVDVEG) has biased composition (acidic residues). The interval 1-29 (MEAEEADVDVEGDVAAAAQPGNDESTASV) is disordered. Ser-107 carries the post-translational modification Phosphoserine. One can recognise an SANT domain in the interval 113–164 (SHSVKWTVEEKELFEQGLAKFGRRWTKIATLLKSRTVLQVKSYARQYFKNKV). Residue Lys-184 forms a Glycyl lysine isopeptide (Lys-Gly) (interchain with G-Cter in SUMO2) linkage. Ser-215 bears the Phosphoserine mark. Disordered regions lie at residues 228–247 (ELTS…DVPN), 260–279 (QEGP…KQGE), and 318–347 (LHRG…NEML). Over residues 230–240 (TSQTSQNSGSH) the composition is skewed to polar residues. The residue at position 233 (Thr-233) is a Phosphothreonine. Positions 318-340 (LHRGEVREEAKHSPSPEPCERQD) are enriched in basic and acidic residues. Ser-332 carries the phosphoserine modification. One can recognise an SWIRM domain in the interval 363-461 (LKPPEQEVEI…FGCEQAVYNR (99 aa)). The MPN domain occupies 568 to 700 (VKVAAEALLI…PLPYSQITCL (133 aa)). Zn(2+)-binding residues include His-647, His-649, and Asp-660. A JAMM motif motif is present at residues 647–660 (HSHPAFDPNPSLRD). The LXXLL motif motif lies at 765-769 (LQKLL).

The protein belongs to the peptidase M67A family. MYSM1 subfamily. As to quaternary structure, component of a large chromatin remodeling complex, at least composed of MYSM1, PCAF, RBM10 and KIF11/TRIP5. Binds histones.

The protein localises to the nucleus. The protein resides in the cytoplasm. Its function is as follows. Metalloprotease with deubiquitinase activity that plays important regulator roles in hematopoietic stem cell function, blood cell production and immune response. Participates in the normal programming of B-cell responses to antigen after the maturation process. Within the cytoplasm, plays critical roles in the repression of innate immunity and autoimmunity. Removes 'Lys-63'-linked polyubiquitins from TRAF3 and TRAF6 complexes. Attenuates NOD2-mediated inflammation and tissue injury by promoting 'Lys-63'-linked deubiquitination of RIPK2 component. Suppresses the CGAS-STING1 signaling pathway by cleaving STING1 'Lys-63'-linked ubiquitin chains. In the nucleus, acts as a hematopoietic transcription regulator derepressing a range of genes essential for normal stem cell differentiation including EBF1 and PAX5 in B-cells, ID2 in NK-cell progenitor or FLT3 in dendritic cell precursors. Deubiquitinates monoubiquitinated histone H2A, a specific tag for epigenetic transcriptional repression, leading to dissociation of histone H1 from the nucleosome. The polypeptide is Deubiquitinase MYSM1 (Mysm1) (Mus musculus (Mouse)).